The chain runs to 622 residues: Prothrombin (622 aa).

An N-terminal signal peptide occupies residues 1-24 (MAHVRGLQLPGCLALAALCSLVHS). A propeptide spanning residues 25–43 (QHVFLAPQQARSLLQRVRR) is cleaved from the precursor. Residues 44-89 (ANTFLEEVRKGNLERECVEETCSYEEAFEALESSTATDVFWAKYTA) form the Gla domain. 4-carboxyglutamate occurs at positions 49, 50, 57, 59, 62, 63, 68, 69, 72, and 75. A disulfide bridge connects residues cysteine 60 and cysteine 65. 11 disulfide bridges follow: cysteine 90/cysteine 103, cysteine 108/cysteine 186, cysteine 129/cysteine 169, cysteine 157/cysteine 181, cysteine 213/cysteine 291, cysteine 234/cysteine 274, cysteine 262/cysteine 286, cysteine 336/cysteine 482, cysteine 391/cysteine 407, cysteine 536/cysteine 550, and cysteine 564/cysteine 594. Kringle domains are found at residues 108–186 (CAEG…IPVC) and 213–291 (CVPD…LNYC). Residues asparagine 121 and asparagine 143 are each glycosylated (N-linked (GlcNAc...) (complex) asparagine). A Peptidase S1 domain is found at 364–618 (IVEGSDAEIG…LKKWIQKVID (255 aa)). The active-site Charge relay system is the histidine 406. Asparagine 416 carries an N-linked (GlcNAc...) (complex) asparagine glycan. Aspartate 462 functions as the Charge relay system in the catalytic mechanism. Positions 551–573 (AGYKPDEGKRGDACEGDSGGPFV) are high affinity receptor-binding region which is also known as the TP508 peptide. Serine 568 serves as the catalytic Charge relay system.

This sequence belongs to the peptidase S1 family. In terms of assembly, heterodimer (named alpha-thrombin) of a light and a heavy chain; disulfide-linked. Forms a heterodimer with SERPINA5. In plasma, interacts (via N-terminus) with alpha-1-microglobulin with molar ratio 1:2 and 1:1; this interaction does not prevent the activation of prothrombin to thrombin. Interacts (thrombin) with iripin-8, a serine protease inhibitor from Ixodes ricinus saliva. Interacts (thrombin) with iripin-3, a serine protease inhibitor from Ixodes ricinus saliva. Interacts (thrombin) with Anopheles albimanus salivary thrombin inhibitor anophelin; the interaction results in thrombin inhibition. Interacts (thrombin) with Anopheles gambiae salivary thrombin inhibitor anophelin; the interaction results in thrombin inhibition. Interacts (thrombin) with Amblyomma variegatum variegin; the interaction results in thrombin inhibition. Interacts (thrombin) with Xenopsylla cheopis salivary thrombin inhibitor XC-42. Interacts (thrombin) with Xenopsylla cheopis salivary thrombin inhibitor XC-43. In terms of processing, the gamma-carboxyglutamyl residues, which bind calcium ions, result from the carboxylation of glutamyl residues by a microsomal enzyme, the vitamin K-dependent carboxylase. The modified residues are necessary for the calcium-dependent interaction with a negatively charged phospholipid surface, which is essential for the conversion of prothrombin to thrombin. N-glycosylated. N-glycan heterogeneity at Asn-121: Hex3HexNAc3 (minor), Hex4HexNAc3 (minor) and Hex5HexNAc4 (major). At Asn-143: Hex4HexNAc3 (minor) and Hex5HexNAc4 (major). Post-translationally, in the penultimate step of the coagulation cascade, prothrombin is converted to thrombin by the prothrombinase complex composed of factor Xa (F10), cofactor Va (F5), and phospholipids. This activation requires factor Xa-catalyzed sequential cleavage at 2 sites, Arg-314 and Arg-363, along 2 possible pathways. In the first pathway, the first cleavage occurs at Arg-314, leading to the formation of the inactive intermediate prethrombin-2. This pathway preferentially occurs on platelets and in the absence of cofactor Va. In the second pathway, the first cleavage occurs at Arg-363, which separates protease domain into 2 chains that remain connected through a disulfide bond and generates the active intermediate meizothrombin. The presence of cofactor Va directs activation along the meizothrombin pathway and greatly accelerates the rate of cleavage at Arg-363, but has a smaller effect on the cleavage of meizothrombin at Arg-314. Meizothrombin accumulates as an intermediate when prothrombinase is assembled on the membrane of red blood cells. Expressed by the liver and secreted in plasma.

The protein resides in the secreted. The protein localises to the extracellular space. It catalyses the reaction Selective cleavage of Arg-|-Gly bonds in fibrinogen to form fibrin and release fibrinopeptides A and B.. With respect to regulation, activity is promoted in the presence of negatively charged surfaces, such as polyphosphate and dextran sulfate. Inhibited by SERPINA5. Functionally, thrombin, which cleaves bonds after Arg and Lys, converts fibrinogen to fibrin and activates factors V, VII, VIII, XIII, and, in complex with thrombomodulin, protein C. Functions in blood homeostasis, inflammation and wound healing. Activates coagulation factor XI (F11); activation is promoted by the contact with negatively charged surfaces. Triggers the production of pro-inflammatory cytokines, such as MCP-1/CCL2 and IL8/CXCL8, in endothelial cells. This Homo sapiens (Human) protein is Prothrombin (F2).